The primary structure comprises 334 residues: Succinate receptor 1 (334 aa).

Residues 5–31 are Extracellular-facing; the sequence is MAWNATCKNWLAAEAALEKYYLSIFYG. An N-linked (GlcNAc...) asparagine glycan is attached at Asn-8. The helical transmembrane segment at 32 to 52 threads the bilayer; it reads IEFVVGVLGNTIVVYGYIFSL. Topologically, residues 53-59 are cytoplasmic; it reads KNWNSSN. A helical transmembrane segment spans residues 60 to 80; that stretch reads IYLFNLSVSDLAFLCTLPMLI. Residues 81–103 are Extracellular-facing; that stretch reads RSYANGNWIYGDVLCISNRYVLH. A disulfide bridge links Cys-95 with Cys-172. The chain crosses the membrane as a helical span at residues 104 to 124; it reads ANLYTSILFLTFISIDRYLII. At 125-137 the chain is on the cytoplasmic side; it reads KYPFREHLLQKKE. Residues 138-158 form a helical membrane-spanning segment; sequence FAILISLAIWVLVTLELLPIL. At 159–185 the chain is on the extracellular side; the sequence is PLINPVITDNGTTCNDFASSGDPNYNL. N-linked (GlcNAc...) asparagine glycosylation is present at Asn-168. The helical transmembrane segment at 186-206 threads the bilayer; that stretch reads IYSMCLTLLGFLIPLFVMCFF. Over 207-230 the chain is Cytoplasmic; sequence YYKIALFLKQRNRQVATALPLEKP. Residues 231-251 form a helical membrane-spanning segment; that stretch reads LNLVIMAVVIFSVLFTPYHVM. The Extracellular portion of the chain corresponds to 252 to 281; the sequence is RNVRIASRLGSWKQYQCTQVVINSFYIVTR. The helical transmembrane segment at 282–302 threads the bilayer; the sequence is PLAFLNSVINPVFYFLLGDHF. The Cytoplasmic segment spans residues 303-334; the sequence is RDMLMNQLRHNFKSLTSFSRWAHELLLSFREK.

Belongs to the G-protein coupled receptor 1 family. In terms of tissue distribution, expressed specifically in kidney. Highly expressed in immature dendritic cells, expression rapidly downregulates after maturation. Also expressed in macrophages.

It localises to the cell membrane. Its function is as follows. G protein-coupled receptor for succinate able to mediate signaling through Gq/GNAQ or Gi/GNAI second messengers depending on the cell type and the processes regulated. Succinate-SUCNR1 signaling serves as a link between metabolic stress, inflammation and energy homeostasis. In macrophages, plays a range of immune-regulatory roles. During inflammation, succinate-SUCNR1 signaling may act as an anti-inflammatory mediator or boost inflammation depending on the inflammatory status of cells. Hyperpolarizes M2 macrophages versus M1 phenotype through Gq signaling by regulating the transcription of genes involved in immune function. In activated M1 macrophages, plays a pro-inflammatory role in response to LPS. Expressed in dendritic cells, where it is involved in the sensing of immunological danger and enhances immunity. Mediates succinate triggered intracelleular calcium mobilization, induces migratory responses and acts in synergy with Toll-like receptor ligands for the production of proinflammatory cytokines as well as an enhancement of antigen-specific activation of helper T cells. In the small intestine, mediates the activation of tuft cells by dietary succinate and triggers type 2 immunity. In adipocytes, plays an important role in the control of energy metabolism. In response to succinate, controls leptin expression in an AMPK-JNK-CEBPA-dependent as well as circadian clock-regulated manner. In muscle tissue, is expressed in non-muscle cells and coordinates muscle remodeling in response to the succinate produced during exercise training in a paracrine manner. In retina, acts as a mediator of vessel growth during retinal development. In response to succinate, regulates the production of angiogenic factors, including VEGF, by retinal ganglion neurons. The polypeptide is Succinate receptor 1 (Homo sapiens (Human)).